Here is a 543-residue protein sequence, read N- to C-terminus: ADP,ATP carrier protein 3 (543 aa).

Transmembrane regions (helical) follow at residues 46 to 66 (VLYL…MGNL), 86 to 106 (IFLP…LSLF), 111 to 131 (MFDI…LVVW), 175 to 195 (FLFL…FNIF), 209 to 229 (ISVY…LTLV), 243 to 263 (ELGF…ILAL), 306 to 326 (LLIA…LVEA), 346 to 366 (FANF…LVVI), 382 to 402 (LASL…LIAF), and 504 to 524 (SVSG…LKYL).

This sequence belongs to the ADP/ATP translocase tlc family.

It is found in the mitosome membrane. In terms of biological role, ATP transporter involved in the uptake of ATP from the parasite cell cytoplasm into the mitosome matrix. Equilibrates nucleotide pools across a concentration gradient between both sides of the mitosome membrane. The protein is ADP,ATP carrier protein 3 (NTT3) of Encephalitozoon cuniculi (strain GB-M1) (Microsporidian parasite).